Here is a 188-residue protein sequence, read N- to C-terminus: Large ribosomal subunit protein eL18 (188 aa).

Lys-119 participates in a covalent cross-link: Glycyl lysine isopeptide (Lys-Gly) (interchain with G-Cter in SUMO2). At Ser-130 the chain carries Phosphoserine. A disordered region spans residues 150-188; that stretch reads RHFGKAPGTPHSHTKPYVRSKGRKFERARGRRASRGYKN. At Thr-158 the chain carries Phosphothreonine. Basic residues-rich tracts occupy residues 161–171 and 178–188; these read SHTKPYVRSKG and RGRRASRGYKN. Lys-164 is covalently cross-linked (Glycyl lysine isopeptide (Lys-Gly) (interchain with G-Cter in SUMO2)).

It belongs to the eukaryotic ribosomal protein eL18 family. In terms of assembly, component of the large ribosomal subunit.

It localises to the cytoplasm. It is found in the cytosol. The protein localises to the rough endoplasmic reticulum. Component of the large ribosomal subunit. The ribosome is a large ribonucleoprotein complex responsible for the synthesis of proteins in the cell. This Bos taurus (Bovine) protein is Large ribosomal subunit protein eL18 (RPL18).